The following is a 127-amino-acid chain: MATISKKKKKVKVTPEGAVHIKASFNNIMVTITDLQGNTVSWSSAGKNGFKGSKKNTPYASQITSEAAAKEAYDLGMRHVNVFIKGPGAGRDAAIRALQGAGLDVRTIKDITPLPHNGCRPPKRRRV.

This sequence belongs to the universal ribosomal protein uS11 family. Part of the 30S ribosomal subunit. Interacts with proteins S7 and S18. Binds to IF-3.

In terms of biological role, located on the platform of the 30S subunit, it bridges several disparate RNA helices of the 16S rRNA. Forms part of the Shine-Dalgarno cleft in the 70S ribosome. The sequence is that of Small ribosomal subunit protein uS11 from Pelodictyon phaeoclathratiforme (strain DSM 5477 / BU-1).